Consider the following 284-residue polypeptide: Nucleotide-binding protein Shewmr4_0670 (284 aa).

8–15 (GRSGSGKS) is an ATP binding site. 56–59 (DVRN) contributes to the GTP binding site.

Belongs to the RapZ-like family.

Displays ATPase and GTPase activities. This Shewanella sp. (strain MR-4) protein is Nucleotide-binding protein Shewmr4_0670.